A 148-amino-acid chain; its full sequence is uncharacterized protein (148 aa).

This is an uncharacterized protein from Bacillus subtilis (strain 168).